A 304-amino-acid chain; its full sequence is MLKDIFRKKRKYATLSSLPPKNSEGGLAYFDEPSPEQESTRKELPDGLWVKCPKCGEALFNKDLVENQRVCLTCSYHFRIPARERLEHLVDPGSFAEWDRELQTTNPLSFPDYEEKLAEAYQKSDVSESVLTGQASIEGMPVVLAFNEGNFMMGSMGSVTGEKITRAIERAIELRCPVIIFSTSGGARMQEGILSLYQMAKTSAALGRLAEEGLLYISVLTDPTFGGVTASYASLGDIHIAEPGALIGFTGPRVIKQTMRKELPEGAQTAEFNQSHGQIDCVVERAEMRKVLGRLLRYHQEGAV.

Residues 16 to 42 (SSLPPKNSEGGLAYFDEPSPEQESTRK) are disordered. A CoA carboxyltransferase N-terminal domain is found at 48–304 (LWVKCPKCGE…LLRYHQEGAV (257 aa)). Residues Cys-52, Cys-55, Cys-71, and Cys-74 each contribute to the Zn(2+) site. A C4-type zinc finger spans residues 52 to 74 (CPKCGEALFNKDLVENQRVCLTC).

The protein belongs to the AccD/PCCB family. Acetyl-CoA carboxylase is a heterohexamer composed of biotin carboxyl carrier protein (AccB), biotin carboxylase (AccC) and two subunits each of ACCase subunit alpha (AccA) and ACCase subunit beta (AccD). Zn(2+) is required as a cofactor.

The protein resides in the cytoplasm. It carries out the reaction N(6)-carboxybiotinyl-L-lysyl-[protein] + acetyl-CoA = N(6)-biotinyl-L-lysyl-[protein] + malonyl-CoA. It functions in the pathway lipid metabolism; malonyl-CoA biosynthesis; malonyl-CoA from acetyl-CoA: step 1/1. Functionally, component of the acetyl coenzyme A carboxylase (ACC) complex. Biotin carboxylase (BC) catalyzes the carboxylation of biotin on its carrier protein (BCCP) and then the CO(2) group is transferred by the transcarboxylase to acetyl-CoA to form malonyl-CoA. The chain is Acetyl-coenzyme A carboxylase carboxyl transferase subunit beta from Desulfitobacterium hafniense (strain Y51).